The primary structure comprises 69 residues: Rubredoxin-1 (69 aa).

The region spanning 14–69 (QASWMCAECGYIYDPAEGNLETNIRPGMPFDKLPDDWSCPVCNHPKNQFTKFISQL) is the Rubredoxin-like domain. Residues Cys-19, Cys-22, Cys-52, and Cys-55 each contribute to the Fe cation site.

The protein belongs to the rubredoxin family. As to quaternary structure, monomer. The cofactor is Fe(3+).

Serves as an electron acceptor for pyruvate ferredoxin oxidoreductase (PFOR). The protein is Rubredoxin-1 (rub1) of Chlorobaculum tepidum (strain ATCC 49652 / DSM 12025 / NBRC 103806 / TLS) (Chlorobium tepidum).